Reading from the N-terminus, the 130-residue chain is Fluoride-specific ion channel FluC (130 aa).

The next 4 helical transmembrane spans lie at 3–23 (FVFLWAALGGAIGSSLRYFVG), 39–59 (GTFSVNIIGCFVIGFMGHLAV), 67–87 (FGIFFITGVLGGFTTFSSYGL), and 102–122 (ISYVLGTNILGFIGVAIGWFL). Residues glycine 77 and threonine 80 each contribute to the Na(+) site.

The protein belongs to the fluoride channel Fluc/FEX (TC 1.A.43) family.

Its subcellular location is the cell inner membrane. The catalysed reaction is fluoride(in) = fluoride(out). Its activity is regulated as follows. Na(+) is not transported, but it plays an essential structural role and its presence is essential for fluoride channel function. Its function is as follows. Fluoride-specific ion channel. Important for reducing fluoride concentration in the cell, thus reducing its toxicity. The polypeptide is Fluoride-specific ion channel FluC (Helicobacter pylori (strain P12)).